A 297-amino-acid chain; its full sequence is Probable porphobilinogen deaminase (297 aa).

S-(dipyrrolylmethanemethyl)cysteine is present on cysteine 241.

This sequence belongs to the HMBS family. Dipyrromethane serves as cofactor.

The enzyme catalyses 4 porphobilinogen + H2O = hydroxymethylbilane + 4 NH4(+). Its pathway is porphyrin-containing compound metabolism; protoporphyrin-IX biosynthesis; coproporphyrinogen-III from 5-aminolevulinate: step 2/4. Tetrapolymerization of the monopyrrole PBG into the hydroxymethylbilane pre-uroporphyrinogen in several discrete steps. The protein is Probable porphobilinogen deaminase of Pyrobaculum arsenaticum (strain DSM 13514 / JCM 11321 / PZ6).